The chain runs to 895 residues: Catenin alpha-3 (895 aa).

The residue at position 56 (Ser-56) is a Phosphoserine. Positions 74–111 form a coiled coil; it reads EKIAQEATVLKDELTASLEEVRKESEALKVSAERFTDD. Ser-160 carries the phosphoserine modification. Positions 325–379 form a coiled coil; it reads RERIIAECNAIRQALQDLLSEYMNNAGKKERSNTLNIALDNMCKKTRDLRRQLRK. 2 positions are modified to phosphoserine: Ser-637 and Ser-647. At Thr-649 the chain carries Phosphothreonine.

It belongs to the vinculin/alpha-catenin family. As to quaternary structure, interacts with CTNNB1. Interacts with PKP2. As to expression, predominantly expressed in heart and testis. Expressed at lower levels in brain, kidney, liver and skeletal muscle.

It is found in the cytoplasm. The protein resides in the cytoskeleton. It localises to the cell junction. The protein localises to the desmosome. Functionally, may be involved in formation of stretch-resistant cell-cell adhesion complexes. This Homo sapiens (Human) protein is Catenin alpha-3.